The chain runs to 743 residues: Type VI secretion system spike protein VgrG1 (743 aa).

Belongs to the VgrG protein family.

The protein localises to the secreted. It carries out the reaction L-arginyl-[protein] + NAD(+) = N(omega)-(ADP-D-ribosyl)-L-arginyl-[protein] + nicotinamide + H(+). Functionally, part of the type VI secretion system specialized secretion system, which delivers several virulence factors in both prokaryotic and eukaryotic cells during infection. Acts directly as an secreted effector with an actin ADP-ribosyltransferase activity that disrupts the host actin cytoskeleton, leading to a decrease in host cell viability and an increase in apoptosis. The chain is Type VI secretion system spike protein VgrG1 (vgrG1) from Aeromonas hydrophila subsp. hydrophila (strain ATCC 7966 / DSM 30187 / BCRC 13018 / CCUG 14551 / JCM 1027 / KCTC 2358 / NCIMB 9240 / NCTC 8049).